Reading from the N-terminus, the 204-residue chain is MSDLVAKTAIDRRLADIVTPVIEGMGFELVRLRLMSGKTRTLQIMADRPDGGIVVDECAEISTAVSAALDVEDPIEENYTLEVSSPGIDRPLTRLKDFDVWTGYEARIETTELIDGRRRFKGELAGTEGDEVLITIEDGRDGYVTIGLKFDWLADAKLILTEELIAEMLRQKKASGNFDESQFDEIEESEGEEADEAEQPPTKH.

The disordered stretch occupies residues glycine 176–histidine 204. Over residues serine 181–glutamate 198 the composition is skewed to acidic residues.

The protein belongs to the RimP family.

Its subcellular location is the cytoplasm. In terms of biological role, required for maturation of 30S ribosomal subunits. This is Ribosome maturation factor RimP from Cereibacter sphaeroides (strain KD131 / KCTC 12085) (Rhodobacter sphaeroides).